We begin with the raw amino-acid sequence, 402 residues long: Caspase-1 (402 aa).

One can recognise a CARD domain in the interval 1–91; that stretch reads MADKILRAKR…YLAGILELQS (91 aa). Residues 1–118 constitute a propeptide that is removed on maturation; that stretch reads MADKILRAKR…PSSSETKEEQ (118 aa). The tract at residues 98 to 125 is disordered; it reads FVATEDSKGGHPSSSETKEEQNKEDGTF. Basic and acidic residues predominate over residues 113-123; it reads ETKEEQNKEDG. Residues H236 and C284 contribute to the active site. The propeptide occupies 297 to 314; that stretch reads SVRDSEEDFLTDAIFEDD. S301 is modified (phosphoserine). R343 is modified (omega-N-methylarginine).

The protein belongs to the peptidase C14A family. As to quaternary structure, heterotetramer that consists of two anti-parallel arranged heterodimers, each one formed by a 20 kDa (Caspase-1 subunit p20) and a 10 kDa (Caspase-1 subunit p10) subunit. May be a component of the inflammasome, a protein complex which also includes PYCARD, CARD8 and NLRP2 and whose function would be the activation of pro-inflammatory caspases. Component of the AIM2 PANoptosome complex, a multiprotein complex that drives inflammatory cell death (PANoptosis). Both the p10 and p20 subunits interact with MEFV. Interacts with CARD17P/INCA and CARD18. Interacts with SERPINB1; this interaction regulates CASP1 activity. Heterotetramer that consists of two anti-parallel arranged heterodimers, each one formed by a 20 kDa (Caspase-1 subunit p20) and a 10 kDa (Caspase-1 subunit p10) subunit. The two subunits are derived from the precursor sequence by an autocatalytic mechanism. Post-translationally, ubiquitinated via 'Lys-11'-linked polyubiquitination. Deubiquitinated by USP8. As to expression, high level expression seen in spleen and lung, low level expression seen in brain, heart, liver, kidney, testis and skeletal muscle.

It is found in the cytoplasm. Its subcellular location is the cell membrane. The catalysed reaction is Strict requirement for an Asp residue at position P1 and has a preferred cleavage sequence of Tyr-Val-Ala-Asp-|-.. Thiol protease involved in a variety of inflammatory processes by proteolytically cleaving other proteins, such as the precursors of the inflammatory cytokines interleukin-1 beta (IL1B) and interleukin 18 (IL18) as well as the pyroptosis inducer Gasdermin-D (GSDMD), into active mature peptides. Plays a key role in cell immunity as an inflammatory response initiator: once activated through formation of an inflammasome complex, it initiates a pro-inflammatory response through the cleavage of the two inflammatory cytokines IL1B and IL18, releasing the mature cytokines which are involved in a variety of inflammatory processes. Cleaves a tetrapeptide after an Asp residue at position P1. Also initiates pyroptosis, a programmed lytic cell death pathway, through cleavage of GSDMD. In contrast to cleavage of interleukin IL1B, recognition and cleavage of GSDMD is not strictly dependent on the consensus cleavage site but depends on an exosite interface on CASP1 that recognizes and binds the Gasdermin-D, C-terminal (GSDMD-CT) part. Cleaves and activates CASP7 in response to bacterial infection, promoting plasma membrane repair. Upon inflammasome activation, during DNA virus infection but not RNA virus challenge, controls antiviral immunity through the cleavage of CGAS, rendering it inactive. In apoptotic cells, cleaves SPHK2 which is released from cells and remains enzymatically active extracellularly. The protein is Caspase-1 (Casp1) of Mus musculus (Mouse).